A 132-amino-acid chain; its full sequence is Small ribosomal subunit protein bS6 (132 aa).

Positions 96-132 (HAEGPSIQMQKRDERERGDRGDRSDRGDRGDRGGFRR) are disordered. Residues 105–132 (QKRDERERGDRGDRSDRGDRGDRGGFRR) show a composition bias toward basic and acidic residues.

The protein belongs to the bacterial ribosomal protein bS6 family.

Binds together with bS18 to 16S ribosomal RNA. The polypeptide is Small ribosomal subunit protein bS6 (Cereibacter sphaeroides (strain ATCC 17023 / DSM 158 / JCM 6121 / CCUG 31486 / LMG 2827 / NBRC 12203 / NCIMB 8253 / ATH 2.4.1.) (Rhodobacter sphaeroides)).